Reading from the N-terminus, the 38-residue chain is MKVRASVKKLCRNCKIIRREGVVRVICSAEPRHKQRQG.

It belongs to the bacterial ribosomal protein bL36 family.

This Ectopseudomonas mendocina (strain ymp) (Pseudomonas mendocina) protein is Large ribosomal subunit protein bL36.